The primary structure comprises 488 residues: Glutamyl-tRNA(Gln) amidotransferase subunit A (488 aa).

Residues lysine 77 and serine 152 each act as charge relay system in the active site. Serine 176 acts as the Acyl-ester intermediate in catalysis.

The protein belongs to the amidase family. GatA subfamily. As to quaternary structure, heterotrimer of A, B and C subunits.

It carries out the reaction L-glutamyl-tRNA(Gln) + L-glutamine + ATP + H2O = L-glutaminyl-tRNA(Gln) + L-glutamate + ADP + phosphate + H(+). Its function is as follows. Allows the formation of correctly charged Gln-tRNA(Gln) through the transamidation of misacylated Glu-tRNA(Gln) in organisms which lack glutaminyl-tRNA synthetase. The reaction takes place in the presence of glutamine and ATP through an activated gamma-phospho-Glu-tRNA(Gln). This Streptococcus pyogenes serotype M49 (strain NZ131) protein is Glutamyl-tRNA(Gln) amidotransferase subunit A.